Here is a 1045-residue protein sequence, read N- to C-terminus: Bifunctional glutamine synthetase adenylyltransferase/adenylyl-removing enzyme (1045 aa).

The adenylyl removase stretch occupies residues 1-527 (MSGPLRSERK…LHSQLFYRPL (527 aa)). Residues 533-1045 (NLSADAIRLS…GVDSMEQREF (513 aa)) form an adenylyl transferase region.

It belongs to the GlnE family. Mg(2+) serves as cofactor.

The enzyme catalyses [glutamine synthetase]-O(4)-(5'-adenylyl)-L-tyrosine + phosphate = [glutamine synthetase]-L-tyrosine + ADP. It catalyses the reaction [glutamine synthetase]-L-tyrosine + ATP = [glutamine synthetase]-O(4)-(5'-adenylyl)-L-tyrosine + diphosphate. Its function is as follows. Involved in the regulation of glutamine synthetase GlnA, a key enzyme in the process to assimilate ammonia. When cellular nitrogen levels are high, the C-terminal adenylyl transferase (AT) inactivates GlnA by covalent transfer of an adenylyl group from ATP to specific tyrosine residue of GlnA, thus reducing its activity. Conversely, when nitrogen levels are low, the N-terminal adenylyl removase (AR) activates GlnA by removing the adenylyl group by phosphorolysis, increasing its activity. The regulatory region of GlnE binds the signal transduction protein PII (GlnB) which indicates the nitrogen status of the cell. This chain is Bifunctional glutamine synthetase adenylyltransferase/adenylyl-removing enzyme, found in Corynebacterium glutamicum (strain ATCC 13032 / DSM 20300 / JCM 1318 / BCRC 11384 / CCUG 27702 / LMG 3730 / NBRC 12168 / NCIMB 10025 / NRRL B-2784 / 534).